Consider the following 360-residue polypeptide: Insulin gene enhancer protein ISL-2 (360 aa).

2 consecutive LIM zinc-binding domains span residues 25 to 86 (AMCV…RLFG) and 87 to 149 (IKCA…LLER). The disordered stretch occupies residues 151–177 (AAGSPRSPGPLPGTPPGLHLPDAGSGQ). S154 and S157 each carry phosphoserine. Positions 192 to 251 (TTRVRTVLNEKQLHTLRTCYAANPRPDALMKEQLVEMTGLSPRVIRVWFQNKRCKDKKKS) form a DNA-binding region, homeobox. The tract at residues 273–302 (GTLLVAGSPSAHENAVQGSAVEVQTYQPPW) is LIM-binding domain (LID). S280 is subject to Phosphoserine. Residues 328 to 337 (SGSLGNSSGS) are compositionally biased toward low complexity. Residues 328 to 360 (SGSLGNSSGSDVTSLSSQLPDTPNSMVPSPVET) form a disordered region. The span at 338 to 360 (DVTSLSSQLPDTPNSMVPSPVET) shows a compositional bias: polar residues.

Interacts with LHX4.

The protein resides in the nucleus. Its function is as follows. Transcriptional factor that defines subclasses of motoneurons that segregate into columns in the spinal cord and select distinct axon pathways. This Rattus norvegicus (Rat) protein is Insulin gene enhancer protein ISL-2 (Isl2).